Reading from the N-terminus, the 347-residue chain is GMP reductase (347 aa).

108–131 contacts NADP(+); that stretch reads ADFQKTKDIMALTDDLIFICIDIA. Positions 181 and 183 each coordinate K(+). Residue C186 is the Thioimidate intermediate of the active site. 216 to 239 contacts NADP(+); that stretch reads IIGDGGCSCAGDVSKAFGGGADFV.

Belongs to the IMPDH/GMPR family. GuaC type 1 subfamily. In terms of assembly, homotetramer.

The enzyme catalyses IMP + NH4(+) + NADP(+) = GMP + NADPH + 2 H(+). Catalyzes the irreversible NADPH-dependent deamination of GMP to IMP. It functions in the conversion of nucleobase, nucleoside and nucleotide derivatives of G to A nucleotides, and in maintaining the intracellular balance of A and G nucleotides. This Aliivibrio fischeri (strain MJ11) (Vibrio fischeri) protein is GMP reductase.